We begin with the raw amino-acid sequence, 31 residues long: Photosystem II reaction center protein T (31 aa).

Residues 3 to 23 traverse the membrane as a helical segment; sequence SVAYIIVLAMALSVLFFAIAF.

This sequence belongs to the PsbT family. In terms of assembly, PSII is composed of 1 copy each of membrane proteins PsbA, PsbB, PsbC, PsbD, PsbE, PsbF, PsbH, PsbI, PsbJ, PsbK, PsbL, PsbM, PsbT, PsbX, PsbY, PsbZ, Psb30/Ycf12, peripheral proteins PsbO, CyanoQ (PsbQ), PsbU, PsbV and a large number of cofactors. It forms dimeric complexes.

The protein localises to the cellular thylakoid membrane. Its function is as follows. Found at the monomer-monomer interface of the photosystem II (PS II) dimer, plays a role in assembly and dimerization of PSII. PSII is a light-driven water plastoquinone oxidoreductase, using light energy to abstract electrons from H(2)O, generating a proton gradient subsequently used for ATP formation. This chain is Photosystem II reaction center protein T, found in Picosynechococcus sp. (strain ATCC 27264 / PCC 7002 / PR-6) (Agmenellum quadruplicatum).